The chain runs to 824 residues: MDRLVDRDISASMFTATSHDPLPTHVRTVVVGGGIIGASIAYHLSAAGENDTLLLESNVLGSGTSWHAAGLVTGARGTTTMTKLAKYGLDFYSRLEQMSGLDVSFQRCGSLSVARTAGRVDELLYAKDVADQQGVRTEWLTEDRYKELWPLATYSGVAGALLLPDDGHINPGHATVALAKLAHSLGTQIRENVAVHKVLRQGDLVVGVLTDQGIVHCDRVILACGLWTRDLAATAGVKVPLYAAEHIHVRSAEIDGAVPELPVYRDLDNSYYIRHEAGRLLVGAFEPDGLPRPVEEIPSNGFAEFGPEWEHFAPIRAKAEGVVPALASAGFDRFLNAPESFTPDANFAVGETSELSNLFVAAGFNSQGIIFAPGIGKELAEWVISGTPGFDSSAVDVQRFSGHQNNRNYLKARTKEGLGRLYAMHWPNLQMETGRNVRRTPLHARLAELGACFGEVNGGERANWYGAPGTSPTYDYSYGRPNWFDRVAEEHKAAREGVVLFDLSPFAKFEVAGPDALEVCQMAATADIDVETDKAVYTLFLNDRAGIELDGTITRLGLDRFLVVTPSFTQQKTAAYLKRIARGKAAAVFDCTAALATIGVMGPKSRELLSRISPEDWSDEAQRYTHGRMVEIADGYAYSLRVSFVGELGYELYPSADMAVNVLDALWEAGQDLGLKLAGYHALDSLRSEKGFRHLGHDIGPIDDPYSAGLRFTISMDKPGGFLGKDALLKLDPTAPDHRTVYVALEDPDPVFVHDETVYCNGLPVGRMTSGSYGHTLGRAVGIAALEPDADLSGDFEVQCKGRLYPAKVSRRPFYDPKGERLRG.

Histidine 67 carries the pros-8alpha-FAD histidine modification.

This sequence belongs to the GcvT family. It depends on FAD as a cofactor.

The enzyme catalyses 4-(methylamino)butanoate + O2 + H2O = 4-aminobutanoate + formaldehyde + H2O2. It participates in alkaloid degradation; nicotine degradation. Catalyzes the oxidative demethylation of 4-methylaminobutanoate produced from the pyrrolidine ring of nicotine. To a much lesser extent, can also use sarcosine as substrate, but is not active against dimethylglycine, methylaminopropionitrile, methylaminopropylamine, and alpha-methylaminobutanoate. The sequence is that of 4-methylaminobutanoate oxidase (formaldehyde-forming) (abo) from Paenarthrobacter nicotinovorans (Arthrobacter nicotinovorans).